Consider the following 200-residue polypeptide: Protein GrpE (200 aa).

The span at 1 to 11 shows a compositional bias: basic and acidic residues; the sequence is MTDNDGQKDFS. Residues 1 to 43 are disordered; sequence MTDNDGQKDFSEAAAENAGSKPGEPRVSKPYIMPDDPEETPSE.

It belongs to the GrpE family. As to quaternary structure, homodimer.

The protein localises to the cytoplasm. Functionally, participates actively in the response to hyperosmotic and heat shock by preventing the aggregation of stress-denatured proteins, in association with DnaK and GrpE. It is the nucleotide exchange factor for DnaK and may function as a thermosensor. Unfolded proteins bind initially to DnaJ; upon interaction with the DnaJ-bound protein, DnaK hydrolyzes its bound ATP, resulting in the formation of a stable complex. GrpE releases ADP from DnaK; ATP binding to DnaK triggers the release of the substrate protein, thus completing the reaction cycle. Several rounds of ATP-dependent interactions between DnaJ, DnaK and GrpE are required for fully efficient folding. The polypeptide is Protein GrpE (Afipia carboxidovorans (strain ATCC 49405 / DSM 1227 / KCTC 32145 / OM5) (Oligotropha carboxidovorans)).